The primary structure comprises 93 residues: MPRSLKKGPFVDDHLQKKVDAENAKGSHNVIKTWSRRSMIVPDMIGHTIAVHDGRKHVPVFVTDSMVGHKLGEFAPTRTYRGHVKEDRKGRRR.

The disordered stretch occupies residues 1–23; that stretch reads MPRSLKKGPFVDDHLQKKVDAEN. Over residues 9–23 the composition is skewed to basic and acidic residues; it reads PFVDDHLQKKVDAEN.

It belongs to the universal ribosomal protein uS19 family.

Protein S19 forms a complex with S13 that binds strongly to the 16S ribosomal RNA. The chain is Small ribosomal subunit protein uS19 from Nocardioides sp. (strain ATCC BAA-499 / JS614).